A 569-amino-acid polypeptide reads, in one-letter code: AP-4 complex accessory subunit Tepsin (569 aa).

In terms of domain architecture, ENTH spans 8 to 141; it reads RDRLSFLHRL…FSDALPQPPS (134 aa). Residues 196–298 are disordered; sequence VRPGPDNPCT…SGASREPGDL (103 aa). A compositionally biased stretch (polar residues) spans 219 to 229; it reads VTPSASHTHPN. Over residues 260-292 the composition is skewed to low complexity; sequence SSPSSQNSSCTSNLSRASDSVSRSGSDSHSGAS. At Ser-400 the chain carries Phosphoserine. Residues 467-524 form a disordered region; that stretch reads VPRSPVPTPSPDTLPPALQDPGELRTQLVCSSEPGTGSEQRLENTDTPKDSSSPCPWS. The span at 470–480 shows a compositional bias: pro residues; that stretch reads SPVPTPSPDTL. The segment covering 494-505 has biased composition (polar residues); it reads LVCSSEPGTGSE. A compositionally biased stretch (basic and acidic residues) spans 506-515; it reads QRLENTDTPK. Positions 525 to 535 are interaction with AP4B1; the sequence is PNSLFAGMELV. The tract at residues 559–569 is interaction with AP4E1; it reads SEPSAFAFLNM.

In terms of assembly, interacts with AP4B1 and AP4E1; the interaction is direct and mediates the association of TEPSIN with the adapter-like complex 4 (AP-4), a heterotetramer composed of AP4B1, AP4E1, AP4M1 and AP4S1.

The protein resides in the golgi apparatus. It is found in the trans-Golgi network membrane. It localises to the cytoplasmic vesicle. Its subcellular location is the cytoplasm. The protein localises to the cytosol. Its function is as follows. Associates with the adapter-like complex 4 (AP-4) and may therefore play a role in vesicular trafficking of proteins at the trans-Golgi network. The protein is AP-4 complex accessory subunit Tepsin of Rattus norvegicus (Rat).